A 464-amino-acid polypeptide reads, in one-letter code: MEGAPRRPDRHARSEEERHVSQYASRLGRRSPAAPTRRRMLRKPRRVAMLSVHTSPLHQPGTGDAGGMNVYIVELAQRLAAINIEVEIFTRATTAALRPTVELSPGVLVRHVDAGPYEGLAKEDLPAQLCAFTHGVMQAWAGHRPGYYDLVHSHYWLSGHVGWLAAQRWGTPLVHAMHTMAKVKNAALAEGDTPEPAARVIGEMQIVAAADRLIANTSEEADELVRHYEAERGKVAVVHPGVNLDRFRPADGRAAARARLGLPQDALIPLFAGRIQPLKAPDVLLRAVAVLLDERPELRSNLVVPVVGGPSGSGLAKPEGLQKLAARLGIADVVRFRPPVGQEQLADWFRAASVLVMPSYNESFGLVAIEAQAAGTPVLAASVGGLPVAVADGRTGFLVQGHDPAAYARVLRDFADDPALSARMGRAAARHAECFGWDTAASATADVYTAAMQAHRRRVRSHHG.

Over residues 1-20 the composition is skewed to basic and acidic residues; that stretch reads MEGAPRRPDRHARSEEERHV. Positions 1 to 44 are disordered; the sequence is MEGAPRRPDRHARSEEERHVSQYASRLGRRSPAAPTRRRMLRKP. Residue histidine 53 coordinates 1D-myo-inositol 3-phosphate. UDP-N-acetyl-alpha-D-glucosamine is bound by residues 59 to 60 and glycine 67; that span reads QP. 1D-myo-inositol 3-phosphate-binding positions include 64–69, lysine 122, tyrosine 155, threonine 179, and arginine 199; that span reads DAGGMN. Arginine 274, lysine 279, and valine 340 together coordinate UDP-N-acetyl-alpha-D-glucosamine. Mg(2+)-binding residues include phenylalanine 349, arginine 350, and alanine 352. 2 residues coordinate UDP-N-acetyl-alpha-D-glucosamine: glutamate 362 and glutamate 370. Threonine 376 provides a ligand contact to Mg(2+).

Belongs to the glycosyltransferase group 1 family. MshA subfamily. In terms of assembly, homodimer.

The enzyme catalyses 1D-myo-inositol 3-phosphate + UDP-N-acetyl-alpha-D-glucosamine = 1D-myo-inositol 2-acetamido-2-deoxy-alpha-D-glucopyranoside 3-phosphate + UDP + H(+). Catalyzes the transfer of a N-acetyl-glucosamine moiety to 1D-myo-inositol 3-phosphate to produce 1D-myo-inositol 2-acetamido-2-deoxy-glucopyranoside 3-phosphate in the mycothiol biosynthesis pathway. This chain is D-inositol 3-phosphate glycosyltransferase, found in Streptomyces avermitilis (strain ATCC 31267 / DSM 46492 / JCM 5070 / NBRC 14893 / NCIMB 12804 / NRRL 8165 / MA-4680).